Here is a 929-residue protein sequence, read N- to C-terminus: Chaperone protein ClpC1, chloroplastic (929 aa).

Residues 1 to 38 (MAMATRVLAQSTPPSLACYQRNVPSRGSGRSRRSVKMM) constitute a chloroplast transit peptide. One can recognise a Clp R domain in the interval 95-237 (FERFTEKAIK…RTQVIRMVGE (143 aa)). Repeat regions lie at residues 98–163 (FTEK…IGRG) and 173–237 (FTPR…MVGE). Residues 257-504 (LEEYGTNLTK…RVRLRHAQVP (248 aa)) are i. 302–309 (GEPGVGKT) is a binding site for ATP. Residues 511–546 (EKELRQITKEKNEAVRGQDFEKAGTLRDREIELRAE) enclose the UVR domain. Positions 552–571 (AKGKEMSKAESETGEEGPMV) are disordered. Positions 553–562 (KGKEMSKAES) are enriched in basic and acidic residues. Residues 571–762 (VTESDIQHIV…LLIMTSNVGS (192 aa)) form an II region. 645–652 (GPTGVGKS) contacts ATP. The span at 908-919 (LNGGSGTPTTSL) shows a compositional bias: polar residues. Residues 908-929 (LNGGSGTPTTSLEEQEDSLPVA) are disordered. The segment covering 920–929 (EEQEDSLPVA) has biased composition (acidic residues).

Belongs to the ClpA/ClpB family. ClpC subfamily. As to quaternary structure, homodimer. May form hexamer and interact with Clp core. Interacts (via N-terminus) with CLPS1. Interacts with CLPF. As to expression, highly expressed in rosette leaves. Expressed in roots, stems and inflorescences. Expressed in photosynthetic green tissues with high levels in young, developing leaf tissues.

The protein localises to the plastid. It localises to the chloroplast stroma. The protein resides in the chloroplast membrane. Molecular chaperone that hydrolyzes ATP and is associated with the chloroplast protein import apparatus. May function as the motor for chloroplast protein translocation, as translocation requires ATP hydrolysis in the stroma. May interact with a ClpP-like protease involved in degradation of denatured proteins in the chloroplast. Involved in the regulation of chlorophyll b biosynthesis through the destabilization of chlorophyllide a oxygenase (CAO) protein in response to the accumulation of chlorophyll b. Involved in leaf iron homeostasis. This chain is Chaperone protein ClpC1, chloroplastic, found in Arabidopsis thaliana (Mouse-ear cress).